Here is a 276-residue protein sequence, read N- to C-terminus: MVKVAAFVCGVASSGKSTFCGALMSYMKSVGRSCHLVNLDPAAENFEWEPTVDIRDLISIDDVMEELDYGPNGGLIYCFEFLMENLDWLNEEIGDYDEDYLIFDMPGQIELYTHVPILPALIRHLQVTLNFRPCAVYLLESQFLVDRTKFFAGVLSAMSAMVMMEVPHINLLSKMDLLKDNNNITKAELKRFLNTDPLLLTGEINETTNPKFHELNRCIVQLIDDFNMVNFLPLESGNEESVSRVLSYIDDATQWYEDQEPKDPDRFEADDLEDDE.

13–18 (SSGKST) is a GTP binding site. Residues 70-72 (GPN) carry the Gly-Pro-Asn (GPN)-loop; involved in dimer interface motif. 173-176 (SKMD) contributes to the GTP binding site. Positions 257-276 (EDQEPKDPDRFEADDLEDDE) are disordered. A compositionally biased stretch (basic and acidic residues) spans 259 to 269 (QEPKDPDRFEA).

Belongs to the GPN-loop GTPase family. As to quaternary structure, heterodimers with gpn1 or gpn2. Binds to RNA polymerase II (RNAPII).

Its subcellular location is the cytoplasm. The protein resides in the nucleus. Its function is as follows. Small GTPase required for proper nuclear import of RNA polymerase II and III (RNAPII and RNAPIII). May act at an RNAP assembly step prior to nuclear import. The polypeptide is GPN-loop GTPase 3 (Schizosaccharomyces pombe (strain 972 / ATCC 24843) (Fission yeast)).